A 225-amino-acid polypeptide reads, in one-letter code: Suppressor of cytokine signaling 3 (225 aa).

A kinase inhibitory region (KIR) region spans residues 22–33 (LKTFSSKSEYQL). Residues 34-45 (VVNAVRKLQESG) form an extended SH2 subdomain (ESS) region. The SH2 domain maps to 46-142 (FYWSAVTGGE…APSFPSPPTE (97 aa)). The span at 131–142 (PGAPSFPSPPTE) shows a compositional bias: pro residues. Residues 131-162 (PGAPSFPSPPTEPSSEVPEQPSAQPLPGSPPR) are disordered. Residues 143-155 (PSSEVPEQPSAQP) show a composition bias toward low complexity. The SOCS box domain occupies 177–224 (VLSRPLSSNVATLQHLCRKTVNGHLDSYEKVTQLPGPIREFLDQYDAP).

As to quaternary structure, interacts with multiple activated proteins of the tyrosine kinase signaling pathway including IGF1 receptor, insulin receptor and JAK2. Binding to JAK2 is mediated through the KIR and SH2 domains to a phosphorylated tyrosine residue within the JAK2 JH1 domain. Binds specific activated tyrosine residues of the leptin, EPO, IL12, GSCF and gp130 receptors. Interaction with CSNK1E stabilizes SOCS3 protein. Component of the probable ECS(SOCS3) E3 ubiquitin-protein ligase complex which contains CUL5, RNF7/RBX2, Elongin BC complex and SOCS3. Interacts with CUL5, RNF7, ELOB and ELOC. Interacts with CUL2. Interacts with FGFR3. Interacts with INSR. Interacts with BCL10; this interaction may interfere with BCL10-binding with PELI2. Interacts with NOD2 (via CARD domain); the interaction promotes NOD2 degradation. Post-translationally, phosphorylated on tyrosine residues after stimulation by the cytokines, IL-2, EPO or IGF1. In terms of tissue distribution, widely expressed with high expression in heart, placenta, skeletal muscle, peripheral blood leukocytes, fetal and adult lung, and fetal liver and kidney. Lower levels in thymus.

It participates in protein modification; protein ubiquitination. Functionally, SOCS family proteins form part of a classical negative feedback system that regulates cytokine signal transduction. SOCS3 is involved in negative regulation of cytokines that signal through the JAK/STAT pathway. Inhibits cytokine signal transduction by binding to tyrosine kinase receptors including IL6ST/gp130, LIF, erythropoietin, insulin, IL12, GCSF and leptin receptors. Binding to JAK2 inhibits its kinase activity and regulates IL6 signaling. Suppresses fetal liver erythropoiesis. Regulates onset and maintenance of allergic responses mediated by T-helper type 2 cells. Probable substrate recognition component of a SCF-like ECS (Elongin BC-CUL2/5-SOCS-box protein) E3 ubiquitin-protein ligase complex which mediates the ubiquitination and subsequent proteasomal degradation of target proteins. This Homo sapiens (Human) protein is Suppressor of cytokine signaling 3.